Here is a 329-residue protein sequence, read N- to C-terminus: GDP-mannose transporter (329 aa).

The Cytoplasmic segment spans residues 1–13 (MSELKVDTGRLSH). A helical membrane pass occupies residues 14–34 (IANSGPMSILAYCASSILMTV). The Lumenal portion of the chain corresponds to 35-44 (TNKCVVGSDK). A helical membrane pass occupies residues 45-65 (FNMLFVMLFAQSLVCVTALVL). Over 66–79 (LKALGYVQYRPLNK) the chain is Cytoplasmic. Residues 80–100 (VDVKNWLLISVLLVLMTYTSS) form a helical membrane-spanning segment. Topologically, residues 101-109 (RALKYLAVP) are lumenal. Residues 110 to 130 (IYTIFKNLTIILIAYGEVLFF) form a helical membrane-spanning segment. Residues 131–133 (GGR) are Cytoplasmic-facing. The helical transmembrane segment at 134–154 (VTAMELSSFLLIVLSSVVATL) threads the bilayer. Residues 155–174 (GDQQALAKKPLAAAVESILG) lie on the Lumenal side of the membrane. Residues 175-195 (LNVGYFWMFTNCICSALFVLI) form a helical membrane-spanning segment. The Cytoplasmic portion of the chain corresponds to 196–214 (MRKRIALTKFKDFDTMFYN). The helical transmembrane segment at 215 to 235 (NILSLPLLMLASFMFEDWGAA) threads the bilayer. Residues 236–245 (NIARNLTKDY) lie on the Lumenal side of the membrane. Asparagine 240 is a glycosylation site (N-linked (GlcNAc...) asparagine). Residues 246–266 (IIIMIISGLASVGISYCSGWC) form a helical membrane-spanning segment. Topologically, residues 267-273 (VRVTSST) are cytoplasmic. A helical transmembrane segment spans residues 274 to 294 (TYSMVGALNKLPIALSGLLFF). Topologically, residues 295–298 (DAPK) are lumenal. A helical transmembrane segment spans residues 299-319 (NFLSIFSIFLGFLSGIVYAVA). Over 320–329 (KQKKQSQPAN) the chain is Cytoplasmic.

Belongs to the TPT transporter family. SLC35D subfamily. In terms of assembly, homooligomer.

The protein resides in the golgi apparatus membrane. It is found in the cytoplasmic vesicle membrane. It localises to the endoplasmic reticulum membrane. Its function is as follows. Involved in the import of GDP-mannose from the cytoplasm into the Golgi lumen. In Eremothecium gossypii (strain ATCC 10895 / CBS 109.51 / FGSC 9923 / NRRL Y-1056) (Yeast), this protein is GDP-mannose transporter (VRG4).